A 1228-amino-acid polypeptide reads, in one-letter code: Serine/threonine-protein kinase CST20 (1228 aa).

The span at 1 to 18 (MSILSENNPTQTSITDPN) shows a compositional bias: polar residues. Disordered regions lie at residues 1 to 382 (MSIL…TAHN) and 405 to 468 (NSTN…HSQE). Low complexity-rich tracts occupy residues 57–70 (NTTS…SLGS) and 95–123 (ESGS…NPES). The span at 148-159 (HQGDDSDNEKQY) shows a compositional bias: basic and acidic residues. Polar residues-rich tracts occupy residues 173–195 (DSYS…NNVS), 205–222 (TSSL…NENA), and 232–244 (PQVS…SFHD). A compositionally biased stretch (low complexity) spans 246–255 (SSVISSSTSV). Polar residues-rich tracts occupy residues 260-275 (SNPT…SYKS) and 309-328 (DTLS…TLQG). Positions 347 to 367 (NTSATSRNTSGTSTSTVVKNS) are enriched in low complexity. A compositionally biased stretch (polar residues) spans 368 to 382 (RSGTSKLTSTSTAHN). The span at 437–466 (KVRGVFSSMFGKNKSTSSSSSSNSGSNSHS) shows a compositional bias: low complexity. Residues 473–486 (ISTPFNAKHLAHVG) enclose the CRIB domain. Disordered stretches follow at residues 543-829 (FHFD…ALAD) and 865-917 (LREK…KQAA). The segment covering 548 to 559 (NKSSSSGWSNEN) has biased composition (polar residues). The segment covering 568–579 (SNSGSGGGGGGA) has biased composition (gly residues). The segment covering 602–611 (ITPSQSMPTK) has biased composition (polar residues). Positions 612–626 (TESKQSENQHPHEDN) are enriched in basic and acidic residues. Polar residues predominate over residues 627–640 (ATQYTPRTPTSHVQ). Low complexity-rich tracts occupy residues 668-681 (PSSQ…SQSD), 693-708 (ISPS…SKSL), and 734-747 (SIPK…SLSS). Over residues 748-759 (QLRPATNGSTTA) the composition is skewed to polar residues. Residues 787 to 805 (APPPPPSASPAPPVPPAPP) show a composition bias toward pro residues. Residues 809 to 824 (LSEQTSEIPQQRTAPS) are compositionally biased toward polar residues. Basic and acidic residues predominate over residues 865 to 874 (LREKNERQNR). Over residues 875 to 890 (QQETGQNNADTASGGS) the composition is skewed to polar residues. Residues 951–1203 (YVDLVKIGQG…ADELLHDNFI (253 aa)) form the Protein kinase domain. ATP contacts are provided by residues 957–965 (IGQGASGGV) and K981. Catalysis depends on D1071, which acts as the Proton acceptor.

The protein belongs to the protein kinase superfamily. STE Ser/Thr protein kinase family. STE20 subfamily.

Its subcellular location is the cytoplasm. It is found in the nucleus. It catalyses the reaction L-seryl-[protein] + ATP = O-phospho-L-seryl-[protein] + ADP + H(+). It carries out the reaction L-threonyl-[protein] + ATP = O-phospho-L-threonyl-[protein] + ADP + H(+). In terms of biological role, MAP4K component of the MAPK pathway required for the mating pheromone response, and the regulation of cell polarity and cell cycle. Phosphorylates histone H2B to form H2BS10ph. Required for hyphal formation and virulence. This chain is Serine/threonine-protein kinase CST20 (CST20), found in Candida albicans (strain SC5314 / ATCC MYA-2876) (Yeast).